A 148-amino-acid polypeptide reads, in one-letter code: Flagellar assembly factor FliW (148 aa).

Belongs to the FliW family. Interacts with translational regulator CsrA and flagellin(s).

The protein localises to the cytoplasm. Functionally, acts as an anti-CsrA protein, binds CsrA and prevents it from repressing translation of its target genes, one of which is flagellin. Binds to flagellin and participates in the assembly of the flagellum. This chain is Flagellar assembly factor FliW, found in Ruminiclostridium cellulolyticum (strain ATCC 35319 / DSM 5812 / JCM 6584 / H10) (Clostridium cellulolyticum).